Consider the following 125-residue polypeptide: uncharacterized protein (125 aa).

A helical membrane pass occupies residues 10 to 26 (IIILVCLMFLAIMVYIY).

It localises to the membrane. This is an uncharacterized protein from Rickettsia prowazekii (strain Madrid E).